Consider the following 149-residue polypeptide: Large ribosomal subunit protein bL9 (149 aa).

Belongs to the bacterial ribosomal protein bL9 family.

Binds to the 23S rRNA. This Synechococcus sp. (strain JA-2-3B'a(2-13)) (Cyanobacteria bacterium Yellowstone B-Prime) protein is Large ribosomal subunit protein bL9.